A 103-amino-acid polypeptide reads, in one-letter code: Co-chaperonin GroES (103 aa).

It belongs to the GroES chaperonin family. In terms of assembly, heptamer of 7 subunits arranged in a ring. Interacts with the chaperonin GroEL.

It localises to the cytoplasm. Together with the chaperonin GroEL, plays an essential role in assisting protein folding. The GroEL-GroES system forms a nano-cage that allows encapsulation of the non-native substrate proteins and provides a physical environment optimized to promote and accelerate protein folding. GroES binds to the apical surface of the GroEL ring, thereby capping the opening of the GroEL channel. The protein is Co-chaperonin GroES of Prochlorococcus marinus (strain MIT 9312).